Here is a 422-residue protein sequence, read N- to C-terminus: Phospho-N-acetylmuramoyl-pentapeptide-transferase (422 aa).

A run of 9 helical transmembrane segments spans residues 28–48, 71–91, 95–115, 136–156, 208–228, 239–259, 279–299, 313–333, and 399–419; these read LMAI…FINL, VGVP…PCLL, LHNI…TLGF, IIGQ…SPSV, AQAV…TAVS, GMAA…AYVS, LVIF…YNAF, IGGI…IPIL, and KITV…IITL.

The protein belongs to the glycosyltransferase 4 family. MraY subfamily. Mg(2+) serves as cofactor.

It localises to the cell inner membrane. It carries out the reaction UDP-N-acetyl-alpha-D-muramoyl-L-alanyl-gamma-D-glutamyl-meso-2,6-diaminopimeloyl-D-alanyl-D-alanine + di-trans,octa-cis-undecaprenyl phosphate = di-trans,octa-cis-undecaprenyl diphospho-N-acetyl-alpha-D-muramoyl-L-alanyl-D-glutamyl-meso-2,6-diaminopimeloyl-D-alanyl-D-alanine + UMP. The protein operates within cell wall biogenesis; peptidoglycan biosynthesis. Functionally, catalyzes the initial step of the lipid cycle reactions in the biosynthesis of the cell wall peptidoglycan: transfers peptidoglycan precursor phospho-MurNAc-pentapeptide from UDP-MurNAc-pentapeptide onto the lipid carrier undecaprenyl phosphate, yielding undecaprenyl-pyrophosphoryl-MurNAc-pentapeptide, known as lipid I. This Phocaeicola vulgatus (strain ATCC 8482 / DSM 1447 / JCM 5826 / CCUG 4940 / NBRC 14291 / NCTC 11154) (Bacteroides vulgatus) protein is Phospho-N-acetylmuramoyl-pentapeptide-transferase.